A 507-amino-acid polypeptide reads, in one-letter code: Rhomboid protease GluP (507 aa).

The next 5 helical transmembrane spans lie at 179–199 (FTYL…INGG), 229–249 (IVLH…WSVG), 261–281 (FLLI…VFSP), 283–303 (PSAG…YVAL), and 312–332 (TIGT…FAVS). Residue serine 288 is the Nucleophile of the active site. Histidine 339 serves as the catalytic Charge relay system. 2 helical membrane passes run 340 to 360 (IGGL…KAGA) and 365 to 385 (LLSA…GLHS). TPR repeat units follow at residues 424 to 457 (ADLL…EPKD) and 458 to 491 (HASY…KPKE).

It belongs to the peptidase S54 family.

Its subcellular location is the cell membrane. It carries out the reaction Cleaves type-1 transmembrane domains using a catalytic dyad composed of serine and histidine that are contributed by different transmembrane domains.. Its activity is regulated as follows. Inhibited by dichloroisocoumarin (DCI) and N-p-tosyl-L-phenylalanine chloromethyl ketone (TPCK), but not by other serine protease inhibitors such as sulfonyl fluoride PMSF and 4-(2-aminoethyl)benzenesulfonyl fluoride (AEBSF). Functionally, rhomboid-type serine protease that catalyzes intramembrane proteolysis. Important for normal cell division and sporulation. May act as a glucose exporter. The sequence is that of Rhomboid protease GluP (gluP) from Bacillus subtilis (strain 168).